A 418-amino-acid chain; its full sequence is Tyrosine--tRNA ligase (418 aa).

Tyr34 contributes to the L-tyrosine binding site. The short motif at 39-48 (PTADSLHLGH) is the 'HIGH' region element. Residues Tyr169 and Gln173 each coordinate L-tyrosine. The 'KMSKS' region motif lies at 229–233 (KFGKS). Lys232 provides a ligand contact to ATP. Residues 352-418 (LNIVDMLVTA…GKKKYAVLTY (67 aa)) enclose the S4 RNA-binding domain.

This sequence belongs to the class-I aminoacyl-tRNA synthetase family. TyrS type 1 subfamily. As to quaternary structure, homodimer.

It is found in the cytoplasm. It catalyses the reaction tRNA(Tyr) + L-tyrosine + ATP = L-tyrosyl-tRNA(Tyr) + AMP + diphosphate + H(+). Functionally, catalyzes the attachment of tyrosine to tRNA(Tyr) in a two-step reaction: tyrosine is first activated by ATP to form Tyr-AMP and then transferred to the acceptor end of tRNA(Tyr). This is Tyrosine--tRNA ligase from Streptococcus equi subsp. equi (strain 4047).